Consider the following 139-residue polypeptide: Putative pre-16S rRNA nuclease (139 aa).

It belongs to the YqgF nuclease family.

The protein resides in the cytoplasm. In terms of biological role, could be a nuclease involved in processing of the 5'-end of pre-16S rRNA. The polypeptide is Putative pre-16S rRNA nuclease (Streptococcus sanguinis (strain SK36)).